An 843-amino-acid chain; its full sequence is Beta-mannosidase B (843 aa).

Glu432 (proton donor) is an active-site residue.

The protein belongs to the glycosyl hydrolase 2 family. Beta-mannosidase B subfamily.

The enzyme catalyses Hydrolysis of terminal, non-reducing beta-D-mannose residues in beta-D-mannosides.. The protein operates within glycan metabolism; N-glycan degradation. Exoglycosidase that cleaves the single beta-linked mannose residue from the non-reducing end of beta-mannosidic oligosaccharides of various complexity and length. Prefers mannobiose over mannotriose and has no activity against polymeric mannan. Is also severely restricted by galactosyl substitutions at the +1 subsite. Releases the terminal mannose residue from mannobiose, mannotriose and galactosyl-mannotriose (GM3), but not from galactosyl-mannobiose (GM2) or di-galactosyl-mannopentaose (G2M5). The sequence is that of Beta-mannosidase B (mndB) from Emericella nidulans (strain FGSC A4 / ATCC 38163 / CBS 112.46 / NRRL 194 / M139) (Aspergillus nidulans).